Consider the following 866-residue polypeptide: Pentatricopeptide repeat-containing protein At1g15510, chloroplastic (866 aa).

The transit peptide at 1–52 (MASSAQSPHFYLNPGKSNSFQSKAYKQRNVNFYWNFGIRRLFLRKSQGLSVL) directs the protein to the chloroplast. 18 PPR repeats span residues 58–92 (STHFSNSQLHGLCANGKLEEAMKLLNSMQELRVAV), 93–123 (DEDVFVALVRLCEWKRAQEEGSKVYSIALSS), 128–158 (GVELGNAFLAMFVRFGNLVDAWYVFGKMSER), 159–194 (NLFSWNVLVGGYAKQGYFDEAMCLYHRMLWVGGVKP), 195–229 (DVYTFPCVLRTCGGIPDLARGKEVHVHVVRYGYEL), 230–260 (DIDVVNALITMYVKCGDVKSARLLFDRMPRR), 261–295 (DIISWNAMISGYFENGMCHEGLELFFAMRGLSVDP), 296–330 (DLMTLTSVISACELLGDRRLGRDIHAYVITTGFAV), 331–365 (DISVCNSLTQMYLNAGSWREAEKLFSRMERKDIVS), 366–396 (WTTMISGYEYNFLPDKAIDTYRMMDQDSVKP), 397–431 (DEITVAAVLSACATLGDLDTGVELHKLAIKARLIS), 432–466 (YVIVANNLINMYSKCKCIDKALDIFHNIPRKNVIS), 467–493 (WTSIIAGLRLNNRCFEALIFLRQMKMT), 497–531 (NAITLTAALAACARIGALMCGKEIHAHVLRTGVGL), 532–561 (DDFLPNALLDMYVRCGRMNTAWSQFNSQKK), 562–596 (DVTSWNILLTGYSERGQGSMVVELFDRMVKSRVRP), 597–631 (DEITFISLLCGCSKSQMVRQGLMYFSKMEDYGVTP), and 632–662 (NLKHYACVVDLLGRAGELQEAHKFIQKMPVT). A type E motif region spans residues 667 to 742 (VWGALLNACR…DAGCSWVEVK (76 aa)). Residues 743–773 (GKVHAFLSDDKYHPQTKEINTVLEGFYEKMS) form a type E(+) motif region. The interval 774–866 (EVGLTKISES…FKDGECSCGD (93 aa)) is type DYW motif.

It belongs to the PPR family. PCMP-H subfamily.

It localises to the plastid. It is found in the chloroplast. Regulates the RNA editing of the chloroplast transcript accD, and is essential for the early stages of chloroplast biogenesis. Required for the RNA editing of the chloroplast transcript ndhF. This Arabidopsis thaliana (Mouse-ear cress) protein is Pentatricopeptide repeat-containing protein At1g15510, chloroplastic (PCMP-H73).